We begin with the raw amino-acid sequence, 913 residues long: Translation initiation factor IF-2 (913 aa).

The tract at residues 1–322 (MTDNNDDKTL…QEKFRRSQMQ (322 aa)) is disordered. A compositionally biased stretch (low complexity) spans 60–113 (VQPVVAAPKPAAPAPVAARPQAPQPRIHQPGGQQQRPGSSQSQQRSGSSAPQQR). Positions 131-180 (MEARRRALMEAQARDVVEAKQRAEDEARRKVEEEQRIAAEKMEAANRAAE) are enriched in basic and acidic residues. Low complexity-rich tracts occupy residues 181–195 (EAAAAKVAASQPAAE), 203–238 (ERPAAAAAPAPRTDARPQSAAAAPRSAPATPDAAAP), and 261–277 (PARGKVVAPAPAKPAAR). A tr-type G domain is found at 411-578 (SRPPVVTIMG…AILLQAEILD (168 aa)). The segment at 420 to 427 (GHVDHGKT) is G1. A GTP-binding site is contributed by 420–427 (GHVDHGKT). Residues 445–449 (GITQH) form a G2 region. The interval 466–469 (DTPG) is G3. Residues 466–470 (DTPGH) and 520–523 (NKID) each bind GTP. The G4 stretch occupies residues 520–523 (NKID). The interval 556-558 (SAK) is G5.

It belongs to the TRAFAC class translation factor GTPase superfamily. Classic translation factor GTPase family. IF-2 subfamily.

It is found in the cytoplasm. Its function is as follows. One of the essential components for the initiation of protein synthesis. Protects formylmethionyl-tRNA from spontaneous hydrolysis and promotes its binding to the 30S ribosomal subunits. Also involved in the hydrolysis of GTP during the formation of the 70S ribosomal complex. The protein is Translation initiation factor IF-2 of Agrobacterium fabrum (strain C58 / ATCC 33970) (Agrobacterium tumefaciens (strain C58)).